The chain runs to 431 residues: Tol-Pal system protein TolB (431 aa).

Positions 1-26 (MSLMTKLGFRALVASCLIAAGSAANA) are cleaved as a signal peptide. Positions 411-431 (PQILSVQGGSVREPSWGPFMQ) are disordered.

The protein belongs to the TolB family. In terms of assembly, the Tol-Pal system is composed of five core proteins: the inner membrane proteins TolA, TolQ and TolR, the periplasmic protein TolB and the outer membrane protein Pal. They form a network linking the inner and outer membranes and the peptidoglycan layer.

Its subcellular location is the periplasm. Functionally, part of the Tol-Pal system, which plays a role in outer membrane invagination during cell division and is important for maintaining outer membrane integrity. The chain is Tol-Pal system protein TolB from Burkholderia multivorans (strain ATCC 17616 / 249).